The primary structure comprises 645 residues: Heat shock protein SSA2 (645 aa).

S2 carries the post-translational modification N-acetylserine. The segment at 581 to 645 is disordered; sequence ANQTATQEEF…NDGPTVEEVD (65 aa). Residues 611 to 621 are compositionally biased toward low complexity; the sequence is AGATPSGAAGA.

The protein belongs to the heat shock protein 70 family. As to quaternary structure, binds human histatin-5, an antifungal peptide from saliva.

It is found in the cytoplasm. It localises to the secreted. The protein localises to the cell wall. Functionally, heat shock protein that may play a role in the transport of polypeptides both across the mitochondrial membranes and into the endoplasmic reticulum. Its function is as follows. Acts as a highly immunodominant antigen. Plays a role in the sensitivity to, and the import of candidacidal beta-defensin peptides. HSP70/SSA1 and SSA2 bind histatin-5, a peptide from human saliva, and mediates its fungicidal activity. SSA2 facilitates fungicidal activity of Hst 5 in binding and intracellular translocation, whereas HSP70/SSA1 appears to have a lesser functional role in Hst 5 toxicity. This Candida albicans (strain SC5314 / ATCC MYA-2876) (Yeast) protein is Heat shock protein SSA2.